The sequence spans 210 residues: Guanylate kinase (210 aa).

The Guanylate kinase-like domain occupies 6–184; it reads GNIYIVVAPS…ARLDLISIVR (179 aa). 13–20 serves as a coordination point for ATP; it reads APSGAGKT.

This sequence belongs to the guanylate kinase family.

The protein localises to the cytoplasm. It carries out the reaction GMP + ATP = GDP + ADP. Essential for recycling GMP and indirectly, cGMP. This is Guanylate kinase from Chromobacterium violaceum (strain ATCC 12472 / DSM 30191 / JCM 1249 / CCUG 213 / NBRC 12614 / NCIMB 9131 / NCTC 9757 / MK).